Reading from the N-terminus, the 1383-residue chain is ATP-dependent RNA helicase TDRD9 (1383 aa).

The segment at 35-82 is disordered; the sequence is EAPREEVQRSEEVPNEDPTAQAQVPVKATAPARPASTSGRSLSQRSSE. The span at 36–46 shows a compositional bias: basic and acidic residues; that stretch reads APREEVQRSEE. Residues 70-80 show a composition bias toward low complexity; that stretch reads STSGRSLSQRS. Residues 144–310 enclose the Helicase ATP-binding domain; sequence ISLIESNSVV…FAVPVQNKMN (167 aa). 157 to 164 is a binding site for ATP; that stretch reads GATGSGKS. The short motif at 256–259 is the DEAH box element; sequence DEVH. The 168-residue stretch at 378 to 545 folds into the Helicase C-terminal domain; sequence SGAQFVSERS…ILKVKLLDMG (168 aa). One can recognise a Tudor domain in the interval 945 to 1005; the sequence is HPHPDLVCLA…REIPCQFLEL (61 aa).

The protein belongs to the DEAD box helicase family. DEAH subfamily. As to quaternary structure, interacts with piRNA-associated proteins PIWIL1 and PIWIL4. In terms of tissue distribution, predominantly expressed in reproductive organs. Detected in mitotic spermatogonia, meiotic spermatocytes (predominantly at the pachytene stage), haploid spermatids in the testis, and in growing oocytes in the ovary (at protein level).

It localises to the cytoplasm. The protein localises to the nucleus. The catalysed reaction is ATP + H2O = ADP + phosphate + H(+). Functionally, ATP-binding RNA helicase which plays a central role during spermatogenesis by repressing transposable elements and preventing their mobilization, which is essential for the germline integrity. Acts via the piRNA metabolic process, which mediates the repression of transposable elements during meiosis by forming complexes composed of piRNAs and Piwi proteins and governs the methylation and subsequent repression of transposons. Acts downstream of piRNA biogenesis: exclusively required for transposon silencing in the nucleus, suggesting that it acts as a nuclear effector in the nucleus together with PIWIL4. This chain is ATP-dependent RNA helicase TDRD9, found in Mus musculus (Mouse).